The chain runs to 358 residues: Ribosomal RNA large subunit methyltransferase M (358 aa).

S-adenosyl-L-methionine is bound by residues Ser187, 220-223 (CPGG), Asp239, Asp259, and Asp276. Lys305 (proton acceptor) is an active-site residue.

Belongs to the class I-like SAM-binding methyltransferase superfamily. RNA methyltransferase RlmE family. RlmM subfamily. Monomer.

Its subcellular location is the cytoplasm. It carries out the reaction cytidine(2498) in 23S rRNA + S-adenosyl-L-methionine = 2'-O-methylcytidine(2498) in 23S rRNA + S-adenosyl-L-homocysteine + H(+). Catalyzes the 2'-O-methylation at nucleotide C2498 in 23S rRNA. The protein is Ribosomal RNA large subunit methyltransferase M of Shewanella woodyi (strain ATCC 51908 / MS32).